A 383-amino-acid chain; its full sequence is UDP-N-acetylglucosamine--N-acetylmuramyl-(pentapeptide) pyrophosphoryl-undecaprenol N-acetylglucosamine transferase (383 aa).

Residues T10 to G12, N124, R165, S190, I245, and Q290 each bind UDP-N-acetyl-alpha-D-glucosamine. A disordered region spans residues S363–S383.

It belongs to the glycosyltransferase 28 family. MurG subfamily.

It localises to the cell inner membrane. The catalysed reaction is di-trans,octa-cis-undecaprenyl diphospho-N-acetyl-alpha-D-muramoyl-L-alanyl-D-glutamyl-meso-2,6-diaminopimeloyl-D-alanyl-D-alanine + UDP-N-acetyl-alpha-D-glucosamine = di-trans,octa-cis-undecaprenyl diphospho-[N-acetyl-alpha-D-glucosaminyl-(1-&gt;4)]-N-acetyl-alpha-D-muramoyl-L-alanyl-D-glutamyl-meso-2,6-diaminopimeloyl-D-alanyl-D-alanine + UDP + H(+). It participates in cell wall biogenesis; peptidoglycan biosynthesis. Its function is as follows. Cell wall formation. Catalyzes the transfer of a GlcNAc subunit on undecaprenyl-pyrophosphoryl-MurNAc-pentapeptide (lipid intermediate I) to form undecaprenyl-pyrophosphoryl-MurNAc-(pentapeptide)GlcNAc (lipid intermediate II). This chain is UDP-N-acetylglucosamine--N-acetylmuramyl-(pentapeptide) pyrophosphoryl-undecaprenol N-acetylglucosamine transferase, found in Anaeromyxobacter dehalogenans (strain 2CP-1 / ATCC BAA-258).